A 412-amino-acid polypeptide reads, in one-letter code: Poly-beta-1,6-N-acetyl-D-glucosamine synthase (412 aa).

The next 4 helical transmembrane spans lie at 7–28 (LLFY…YFFI), 298–320 (IASI…TANI), 332–354 (IFFF…ALFI), and 364–386 (VGLI…VVIM).

Belongs to the glycosyltransferase 2 family.

It is found in the cell membrane. Its function is as follows. N-acetylglucosaminyltransferase that catalyzes the polymerization of single monomer units of UDP-N-acetylglucosamine to produce the linear homomer poly-beta-1,6-N-acetyl-D-glucosamine (PNAG, also referred to as PIA), a biofilm adhesin polysaccharide. Requires IcaD for full activity. This chain is Poly-beta-1,6-N-acetyl-D-glucosamine synthase (icaA), found in Staphylococcus epidermidis.